Here is a 247-residue protein sequence, read N- to C-terminus: Lysosomal membrane ascorbate-dependent ferrireductase CYB561A3 (247 aa).

The Cytoplasmic portion of the chain corresponds to 1 to 3 (MRG). Residues 4–24 (IVGFYITYLLCLILGIACVVL) form a helical membrane-spanning segment. One can recognise a Cytochrome b561 domain in the interval 13–223 (LCLILGIACV…FGLVVLKILS (211 aa)). Residues 25 to 46 (VVHWNFMYRDGFAWDGSSKNFN) are Lumenal-facing. A helical transmembrane segment spans residues 47–67 (WHPVLMVTGMLVLYGNAAVVY). Residues H48 and R68 each coordinate heme b. The Cytoplasmic portion of the chain corresponds to 68–82 (RIPLTWGHNKLPWKL). Positions 77 and 81 each coordinate L-ascorbate. A helical transmembrane segment spans residues 83–103 (LHAGLLLLSFIFSVIGLCAVF). Heme b is bound by residues H84, 113–116 (NLYS), and H118. Over 104-120 (NFHNVHHTANLYSLHSW) the chain is Lumenal. Residues 121-141 (VGICTAALFTAQWVMGFTSFL) form a helical membrane-spanning segment. The Cytoplasmic portion of the chain corresponds to 142 to 155 (LPCTPMAVRAFVKP). R150 is a binding site for L-ascorbate. Residues 156 to 176 (THVWMGAMILVLSIVSCISGI) traverse the membrane as a helical segment. Heme b is bound by residues H157 and E178. The Lumenal portion of the chain corresponds to 177–201 (NEKLFFVLKETTNGTKPYSALPPEA). N189 carries an N-linked (GlcNAc...) asparagine glycan. Residues 202 to 222 (VAANSLGVIIVAFGLVVLKIL) traverse the membrane as a helical segment. At 223-247 (SNQMWQRPEPGDDEGVYRPLAYDGS) the chain is on the cytoplasmic side. Position 228 (Q228) interacts with heme b.

Homodimer. Requires heme b as cofactor.

It is found in the late endosome membrane. Its subcellular location is the lysosome membrane. It catalyses the reaction Fe(3+)(out) + L-ascorbate(in) = monodehydro-L-ascorbate radical(in) + Fe(2+)(out) + H(+). Its function is as follows. Transmembrane reductase that uses ascorbate as an electron donor in the cytoplasm and transfers electrons across membranes to reduce iron cations Fe(3+) into Fe(2+) in the lumen of the late endosome and lysosome. Reduced iron can then be extruded from the late endosome and lysosome to the cytoplasm by divalent metal-specific transporters. It is therefore most probably involved in endosomal and lysosomal cellular iron homeostasis. The chain is Lysosomal membrane ascorbate-dependent ferrireductase CYB561A3 (cyb561a3a) from Danio rerio (Zebrafish).